The chain runs to 164 residues: V-type proton ATPase 16 kDa proteolipid subunit (164 aa).

Residues 1-10 (MSDLCPPTAP) lie on the Lumenal side of the membrane. Residues 11–31 (FFGFMGAAVALIFANLGAAYG) traverse the membrane as a helical segment. Residues 32–53 (TAKSGVGVSSMGVMKPDLVMKS) are Cytoplasmic-facing. A helical transmembrane segment spans residues 54–74 (IIPVVMAGVLGIYGLIIAVII). Residues 75–96 (GNGVKGPEGGKPQYSSFTGFAH) lie on the Lumenal side of the membrane. A helical membrane pass occupies residues 97 to 118 (LAAGLACGLSGMAAGIAIGIVG). The Cytoplasmic segment spans residues 119 to 130 (DAGVRASAQQAK). A helical membrane pass occupies residues 131-155 (LYVGMVLILIFAEALGLYGLIVGLI). The Lumenal segment spans residues 156-164 (LTSKEAPCS).

This sequence belongs to the V-ATPase proteolipid subunit family. In terms of assembly, V-ATPase is a heteromultimeric enzyme composed of a peripheral catalytic V1 complex (main components: subunits A, B, C, D, E, and F) attached to an integral membrane V0 proton pore complex (main component: the proteolipid protein; which is present as a hexamer that forms the proton-conducting pore).

Its subcellular location is the vacuole membrane. Its function is as follows. Proton-conducting pore forming subunit of the membrane integral V0 complex of vacuolar ATPase. V-ATPase is responsible for acidifying a variety of intracellular compartments in eukaryotic cells. This is V-type proton ATPase 16 kDa proteolipid subunit (VAP) from Chrysotila carterae (Marine alga).